The chain runs to 159 residues: Endoribonuclease YbeY (159 aa).

The Zn(2+) site is built by His-125, His-129, and His-135.

Belongs to the endoribonuclease YbeY family. Zn(2+) is required as a cofactor.

The protein resides in the cytoplasm. Functionally, single strand-specific metallo-endoribonuclease involved in late-stage 70S ribosome quality control and in maturation of the 3' terminus of the 16S rRNA. The protein is Endoribonuclease YbeY of Ligilactobacillus salivarius (strain UCC118) (Lactobacillus salivarius).